The chain runs to 250 residues: NADH-quinone oxidoreductase subunit B 2 (250 aa).

[4Fe-4S] cluster is bound by residues C41, C42, C107, and C137.

This sequence belongs to the complex I 20 kDa subunit family. As to quaternary structure, NDH-1 is composed of 14 different subunits. Subunits NuoB, C, D, E, F, and G constitute the peripheral sector of the complex. [4Fe-4S] cluster is required as a cofactor.

It is found in the cell membrane. The catalysed reaction is a quinone + NADH + 5 H(+)(in) = a quinol + NAD(+) + 4 H(+)(out). NDH-1 shuttles electrons from NADH, via FMN and iron-sulfur (Fe-S) centers, to quinones in the respiratory chain. The immediate electron acceptor for the enzyme in this species is believed to be ubiquinone. Couples the redox reaction to proton translocation (for every two electrons transferred, four hydrogen ions are translocated across the cytoplasmic membrane), and thus conserves the redox energy in a proton gradient. This Herpetosiphon aurantiacus (strain ATCC 23779 / DSM 785 / 114-95) protein is NADH-quinone oxidoreductase subunit B 2.